A 304-amino-acid polypeptide reads, in one-letter code: Non-specific ribonucleoside hydrolase RihC (304 aa).

Residue H233 is part of the active site.

The protein belongs to the IUNH family. RihC subfamily.

Functionally, hydrolyzes both purine and pyrimidine ribonucleosides with a broad-substrate specificity. This Escherichia coli O127:H6 (strain E2348/69 / EPEC) protein is Non-specific ribonucleoside hydrolase RihC.